The sequence spans 625 residues: tRNA uridine 5-carboxymethylaminomethyl modification enzyme MnmG (625 aa).

FAD-binding positions include 9–14 (GGGHAG), valine 121, and serine 177. 271–285 (GPRYCPSIEDKVNRF) contributes to the NAD(+) binding site. Glutamine 368 contributes to the FAD binding site.

Belongs to the MnmG family. As to quaternary structure, homodimer. Heterotetramer of two MnmE and two MnmG subunits. FAD serves as cofactor.

Its subcellular location is the cytoplasm. NAD-binding protein involved in the addition of a carboxymethylaminomethyl (cmnm) group at the wobble position (U34) of certain tRNAs, forming tRNA-cmnm(5)s(2)U34. The chain is tRNA uridine 5-carboxymethylaminomethyl modification enzyme MnmG from Aliarcobacter butzleri (strain RM4018) (Arcobacter butzleri).